We begin with the raw amino-acid sequence, 346 residues long: D-amino-acid oxidase (346 aa).

Residues Gly22, Ile24, Thr52, Thr53, Ser54, Ala58, Ala59, Leu60, and Thr187 each contribute to the FAD site. D-proline contacts are provided by Tyr227 and Arg284. Positions 227 and 284 each coordinate D-serine. 5 residues coordinate FAD: Arg284, Gly311, Gly312, Gly314, and Thr316. Arg284 serves as a coordination point for D-dopa. D-proline is bound at residue Gly312. Residue Gly312 coordinates D-serine. Position 312 (Gly312) interacts with D-dopa. The Microbody targeting signal motif lies at 344–346; the sequence is SKL.

It belongs to the DAMOX/DASOX family. Requires FAD as cofactor.

Its subcellular location is the peroxisome matrix. It carries out the reaction a D-alpha-amino acid + O2 + H2O = a 2-oxocarboxylate + H2O2 + NH4(+). The enzyme catalyses D-serine + O2 + H2O = 3-hydroxypyruvate + H2O2 + NH4(+). The catalysed reaction is D-phenylalanine + O2 + H2O = 3-phenylpyruvate + H2O2 + NH4(+). It catalyses the reaction D-alanine + O2 + H2O = pyruvate + H2O2 + NH4(+). It carries out the reaction D-arginine + O2 + H2O = 5-guanidino-2-oxopentanoate + H2O2 + NH4(+). The enzyme catalyses D-methionine + O2 + H2O = 4-methylsulfanyl-2-oxobutanoate + H2O2 + NH4(+). The catalysed reaction is D-ornithine + O2 + H2O = 5-amino-2-oxopentanoate + H2O2 + NH4(+). It catalyses the reaction D-leucine + O2 + H2O = 4-methyl-2-oxopentanoate + H2O2 + NH4(+). It carries out the reaction D-lysine + O2 + H2O = 6-amino-2-oxohexanoate + H2O2 + NH4(+). The enzyme catalyses D-proline + O2 = 1-pyrroline-2-carboxylate + H2O2. The catalysed reaction is D-valine + O2 + H2O = 3-methyl-2-oxobutanoate + H2O2 + NH4(+). It catalyses the reaction D-histidine + O2 + H2O = 3-(imidazol-5-yl)pyruvate + H2O2 + NH4(+). Its function is as follows. Catalyzes the oxidative deamination of D-amino acids with broad substrate specificity. Has low in vitro and no in vivo activity on D-serine; primary D-serine degradation is performed by the D-serine dehydratase dsd. The sequence is that of D-amino-acid oxidase (ddo-1) from Dictyostelium discoideum (Social amoeba).